The chain runs to 278 residues: 2-(acetamidomethylene)succinate hydrolase (278 aa).

Residues isoleucine 41 and serine 106–leucine 107 each bind chloride. Serine 106 acts as the Nucleophile in catalysis. Residues aspartate 130 and histidine 258 contribute to the active site.

It belongs to the AB hydrolase superfamily. As to quaternary structure, homodimer.

It catalyses the reaction 2-(acetamidomethylene)succinate + 2 H2O + H(+) = succinate semialdehyde + acetate + NH4(+) + CO2. It participates in cofactor degradation; B6 vitamer degradation. Its function is as follows. Catalyzes the final reaction in the degradation of vitamin B6 from (E)-2-(acetamidomethylene)succinate (E-2AMS) to produce succinic semialdehyde, acetate, ammonia and carbon dioxide. This is 2-(acetamidomethylene)succinate hydrolase from Mesorhizobium japonicum (strain LMG 29417 / CECT 9101 / MAFF 303099) (Mesorhizobium loti (strain MAFF 303099)).